The sequence spans 328 residues: Nickel import system permease protein NikB (328 aa).

The next 6 helical transmembrane spans lie at 11-31 (LMQMIVVLFVISTLTFILMKL), 104-124 (LLISFSTLVVSLCISIPLGII), 139-159 (VISTLSISLPAFFIGIILLFI), 170-190 (ILSQFILPVITLSLGMCAYII), 229-249 (ILPIIPLLGISLGSLIGGTVV), and 279-299 (VLFIGFFVVIINTIADLLTLL). In terms of domain architecture, ABC transmembrane type-1 spans 100 to 297 (APITLLISFS…IINTIADLLT (198 aa)).

This sequence belongs to the binding-protein-dependent transport system permease family. OppBC subfamily. The complex is composed of two ATP-binding proteins (NikD and NikE), two transmembrane proteins (NikB and NikC) and a solute-binding protein (NikA).

It localises to the cell membrane. Its function is as follows. Part of the ABC transporter complex NikABCDE (Opp2) involved in nickel import. Probably responsible for the translocation of the substrate across the membrane. In Staphylococcus aureus (strain Mu50 / ATCC 700699), this protein is Nickel import system permease protein NikB.